Consider the following 557-residue polypeptide: Probable serine/threonine-protein kinase WNK7 (557 aa).

Positions 28 to 285 (IRYKEVIGKG…AEELLLDSFL (258 aa)) constitute a Protein kinase domain. ATP-binding positions include 108 to 111 (TELF) and Lys-158. Catalysis depends on Asp-175, which acts as the Proton acceptor. Polar residues predominate over residues 451–477 (QNQSSKDNHQNGASSQAGESISHSLSS). Positions 451–517 (QNQSSKDNHQ…EEEEDERLKE (67 aa)) are disordered. Ser-505 bears the Phosphoserine mark.

Belongs to the protein kinase superfamily. Ser/Thr protein kinase family. WNK subfamily.

It carries out the reaction L-seryl-[protein] + ATP = O-phospho-L-seryl-[protein] + ADP + H(+). The catalysed reaction is L-threonyl-[protein] + ATP = O-phospho-L-threonyl-[protein] + ADP + H(+). Its function is as follows. May regulate flowering time by modulating the photoperiod pathway. This is Probable serine/threonine-protein kinase WNK7 (WNK7) from Arabidopsis thaliana (Mouse-ear cress).